The sequence spans 419 residues: L-rhamnose isomerase (419 aa).

Mn(2+)-binding residues include H262, D294, and D296.

The protein belongs to the rhamnose isomerase family. As to quaternary structure, homotetramer. Mn(2+) serves as cofactor.

It localises to the cytoplasm. It carries out the reaction L-rhamnopyranose = L-rhamnulose. The protein operates within carbohydrate degradation; L-rhamnose degradation; glycerone phosphate from L-rhamnose: step 1/3. Its function is as follows. Catalyzes the interconversion of L-rhamnose and L-rhamnulose. The sequence is that of L-rhamnose isomerase from Escherichia coli O17:K52:H18 (strain UMN026 / ExPEC).